The primary structure comprises 125 residues: Major intrinsically disordered NOTCH2-binding receptor 1-like (125 aa).

The N-linked (GlcNAc...) asparagine glycan is linked to Asn37. The chain crosses the membrane as a helical span at residues 100 to 120 (FAFITLFVCAVVIIITVPIVV).

It belongs to the MINAR family. Interacts with NOTCH2. In terms of tissue distribution, highly expressed in the auditory hair cells.

Its subcellular location is the lysosome membrane. The protein resides in the endoplasmic reticulum membrane. In terms of biological role, binds cholesterol and may regulate the distribution and homeostasis of cholesterol in hair cells. May play a role in angiogenesis. In Danio rerio (Zebrafish), this protein is Major intrinsically disordered NOTCH2-binding receptor 1-like.